We begin with the raw amino-acid sequence, 199 residues long: ATP-dependent Clp protease proteolytic subunit (199 aa).

Ser97 (nucleophile) is an active-site residue. His122 is an active-site residue.

It belongs to the peptidase S14 family. In terms of assembly, fourteen ClpP subunits assemble into 2 heptameric rings which stack back to back to give a disk-like structure with a central cavity, resembling the structure of eukaryotic proteasomes.

It is found in the cytoplasm. It catalyses the reaction Hydrolysis of proteins to small peptides in the presence of ATP and magnesium. alpha-casein is the usual test substrate. In the absence of ATP, only oligopeptides shorter than five residues are hydrolyzed (such as succinyl-Leu-Tyr-|-NHMec, and Leu-Tyr-Leu-|-Tyr-Trp, in which cleavage of the -Tyr-|-Leu- and -Tyr-|-Trp bonds also occurs).. Cleaves peptides in various proteins in a process that requires ATP hydrolysis. Has a chymotrypsin-like activity. Plays a major role in the degradation of misfolded proteins. The chain is ATP-dependent Clp protease proteolytic subunit from Geobacter sulfurreducens (strain ATCC 51573 / DSM 12127 / PCA).